Reading from the N-terminus, the 416-residue chain is Putative competence-damage inducible protein (416 aa).

Belongs to the CinA family.

The chain is Putative competence-damage inducible protein from Bacillus pumilus (strain SAFR-032).